Reading from the N-terminus, the 283-residue chain is Hydroxyacylglutathione hydrolase-like protein (283 aa).

H54, H56, D58, H59, H110, D134, and H173 together coordinate Zn(2+).

The protein belongs to the metallo-beta-lactamase superfamily. Glyoxalase II family. Zn(2+) is required as a cofactor.

In terms of biological role, hydrolase acting on ester bonds. This Mus musculus (Mouse) protein is Hydroxyacylglutathione hydrolase-like protein (Haghl).